A 122-amino-acid chain; its full sequence is UPF0231 protein VIBHAR_03438 (122 aa).

It belongs to the UPF0231 family.

In Vibrio campbellii (strain ATCC BAA-1116), this protein is UPF0231 protein VIBHAR_03438.